We begin with the raw amino-acid sequence, 97 residues long: Ice-structuring protein (97 aa).

Positions 1–23 are cleaved as a signal peptide; the sequence is MALSLFTVGQLIFLFWTLRITEA. The propeptide at 24 to 48 is removed by a dipeptidylpeptidase; sequence NPDPAAKAAPAAVADPAAAAAAAVA.

The protein belongs to the type-I AFP family. In terms of tissue distribution, detected in blood serum (at protein level).

It localises to the secreted. Its function is as follows. Contributes to protect fish blood from freezing at subzero sea water temperatures. Lowers the blood freezing point. Binds to nascent ice crystals and prevents further growth. The sequence is that of Ice-structuring protein from Myzopsetta ferruginea (Yellowtail flounder).